A 133-amino-acid chain; its full sequence is Ribonuclease P protein component (133 aa).

It belongs to the RnpA family. In terms of assembly, consists of a catalytic RNA component (M1 or rnpB) and a protein subunit.

The enzyme catalyses Endonucleolytic cleavage of RNA, removing 5'-extranucleotides from tRNA precursor.. RNaseP catalyzes the removal of the 5'-leader sequence from pre-tRNA to produce the mature 5'-terminus. It can also cleave other RNA substrates such as 4.5S RNA. The protein component plays an auxiliary but essential role in vivo by binding to the 5'-leader sequence and broadening the substrate specificity of the ribozyme. In Corynebacterium glutamicum (strain ATCC 13032 / DSM 20300 / JCM 1318 / BCRC 11384 / CCUG 27702 / LMG 3730 / NBRC 12168 / NCIMB 10025 / NRRL B-2784 / 534), this protein is Ribonuclease P protein component.